Consider the following 159-residue polypeptide: Ribosomal RNA large subunit methyltransferase H (159 aa).

Residues Leu76 and Gly108 each contribute to the S-adenosyl-L-methionine site.

Belongs to the RNA methyltransferase RlmH family. In terms of assembly, homodimer.

The protein localises to the cytoplasm. The enzyme catalyses pseudouridine(1915) in 23S rRNA + S-adenosyl-L-methionine = N(3)-methylpseudouridine(1915) in 23S rRNA + S-adenosyl-L-homocysteine + H(+). Functionally, specifically methylates the pseudouridine at position 1915 (m3Psi1915) in 23S rRNA. This is Ribosomal RNA large subunit methyltransferase H from Lactiplantibacillus plantarum (strain ATCC BAA-793 / NCIMB 8826 / WCFS1) (Lactobacillus plantarum).